Consider the following 410-residue polypeptide: Structure-specific endonuclease subunit SLX1 homolog (410 aa).

The 84-residue stretch at glutamine 6–isoleucine 89 folds into the GIY-YIG domain.

The protein belongs to the SLX1 family. As to quaternary structure, forms a heterodimer with a member of the SLX4 family. It depends on a divalent metal cation as a cofactor.

The protein localises to the nucleus. Its function is as follows. Catalytic subunit of a heterodimeric structure-specific endonuclease that resolves DNA secondary structures generated during DNA repair and recombination. Has endonuclease activity towards branched DNA substrates, introducing single-strand cuts in duplex DNA close to junctions with ss-DNA. In Cryptosporidium parvum (strain Iowa II), this protein is Structure-specific endonuclease subunit SLX1 homolog.